Consider the following 90-residue polypeptide: Small ribosomal subunit protein uS17 (90 aa).

Belongs to the universal ribosomal protein uS17 family. As to quaternary structure, part of the 30S ribosomal subunit.

In terms of biological role, one of the primary rRNA binding proteins, it binds specifically to the 5'-end of 16S ribosomal RNA. The sequence is that of Small ribosomal subunit protein uS17 from Gluconobacter oxydans (strain 621H) (Gluconobacter suboxydans).